Consider the following 133-residue polypeptide: Ribonuclease P protein component (133 aa).

The protein belongs to the RnpA family. Consists of a catalytic RNA component (M1 or rnpB) and a protein subunit.

It carries out the reaction Endonucleolytic cleavage of RNA, removing 5'-extranucleotides from tRNA precursor.. In terms of biological role, RNaseP catalyzes the removal of the 5'-leader sequence from pre-tRNA to produce the mature 5'-terminus. It can also cleave other RNA substrates such as 4.5S RNA. The protein component plays an auxiliary but essential role in vivo by binding to the 5'-leader sequence and broadening the substrate specificity of the ribozyme. This Paramagnetospirillum magneticum (strain ATCC 700264 / AMB-1) (Magnetospirillum magneticum) protein is Ribonuclease P protein component.